The sequence spans 213 residues: Non-structural protein NP-1 (213 aa).

Positions 1 to 80 are disordered; sequence MERSRSPRET…ATRKETATKK (80 aa). Basic and acidic residues-rich tracts occupy residues 15–33 and 43–58; these read SRDKSDADWSERRREERTR and AHGERSWGSWRSREKN.

Belongs to the Bocaparvovirus Non-structural protein NP-1 family.

The protein resides in the host nucleus. Functionally, required for the expression of the capsid proteins. Performs the splicing and internal polyadenylation of the viral capsid-encoding mRNA precursor, which allows its maturation and expression. Transactivates the viral promoter. The sequence is that of Non-structural protein NP-1 (NP1) from Bos taurus (Bovine).